Here is a 74-residue protein sequence, read N- to C-terminus: MPRQVTDIKLFLQLAHRGDATSARVKKNQNKAVKFKLRCSRYLYTLVVADAKKAEKLRQSLPPALTVTEVGKKA.

Belongs to the eukaryotic ribosomal protein eL38 family. Component of the large ribosomal subunit (LSU). Mature yeast ribosomes consist of a small (40S) and a large (60S) subunit. The 40S small subunit contains 1 molecule of ribosomal RNA (18S rRNA) and at least 33 different proteins. The large 60S subunit contains 3 rRNA molecules (25S, 5.8S and 5S rRNA) and at least 46 different proteins.

The protein localises to the cytoplasm. In terms of biological role, component of the ribosome, a large ribonucleoprotein complex responsible for the synthesis of proteins in the cell. The small ribosomal subunit (SSU) binds messenger RNAs (mRNAs) and translates the encoded message by selecting cognate aminoacyl-transfer RNA (tRNA) molecules. The large subunit (LSU) contains the ribosomal catalytic site termed the peptidyl transferase center (PTC), which catalyzes the formation of peptide bonds, thereby polymerizing the amino acids delivered by tRNAs into a polypeptide chain. The nascent polypeptides leave the ribosome through a tunnel in the LSU and interact with protein factors that function in enzymatic processing, targeting, and the membrane insertion of nascent chains at the exit of the ribosomal tunnel. The protein is Large ribosomal subunit protein eL38B (rpl3802) of Schizosaccharomyces pombe (strain 972 / ATCC 24843) (Fission yeast).